Consider the following 818-residue polypeptide: METYQQMNSGSGPRSVGTPQGQYMDVGEMPPMDAKQQTMLWQQNQYMGDSGIQSGATTQAPPSVSSKHGLDDMDTGEGMDTSRMMFDFDQGFSTQAFTQEQVDEMNQQLNQTRSQRVRAAMFPETLEEGVQIPSTQLDPGQPTAVQRLSEPSQMLKHAVVNLINYQDDADLATRAIPELTKLLNDEDQVVVSQAAMMVHQLSKKEASRHAIMNSPQMVAALVRAMTNTNDLETTRCAAGTLHNLSHHRQGLLTIFKSGGIPALVKLLSSPVESVLFYAITTLHNLLLHQEGSKMAVRLAGGLQKMVLLLQRNNLKFLAITTDCLQILAYGNQESKLIILASGGPGELVRIMRSYTYEKLLWTTSRVLKVLSVCASNKPAIVEAGSAGPSMHLGHQSQRLVQNCLWTLRNLSDAATKSSDIEGLLQMLVQLLASNDINIVTCAAGILSNLTCNNQRNKVTVCQVGGIEALVRTILQAGDREDITEPAVCALRHLTSRHGEAEMAQNAVRLHYGLPVLVKLLHPPSRWPLIKAVVGLIRNLALCPANHAPLREHGAIPRIVQLLIRAHQDTQRRATAGSGNTSAYVDGVRMEEIVEGTVGALHIMAREAHNRAVIRGLNCISLFAQLLYSPIDNIQRVAAGVLCELAADKEGAEMIEQEGTTAPLTELLHSRNEGVATYAAAVLFRMSEDKPQDYKKRLSVELTSSLFRGEQVPWGEPPGLDDMDSSQLLPEEQGFRGYQGSGPGSVPSGPPHDMNRQDSMQGLELGSQQGTAYGSHMPDLGPNTDLHFDPMDGGGSSMGGPHTPTDPQNQMAAWFDTDL.

Polar residues-rich tracts occupy residues 1–21 (METYQQMNSGSGPRSVGTPQG) and 48–66 (GDSGIQSGATTQAPPSVSS). Disordered stretches follow at residues 1–24 (METYQQMNSGSGPRSVGTPQGQYM) and 48–71 (GDSGIQSGATTQAPPSVSSKHGLD). ARM repeat units follow at residues 164 to 203 (NYQDDADLATRAIPELTKLLNDEDQVVVSQAAMMVHQLSK), 248 to 287 (RQGLLTIFKSGGIPALVKLLSSPVESVLFYAITTLHNLLL), 412 to 451 (DAATKSSDIEGLLQMLVQLLASNDINIVTCAAGILSNLTC), 454 to 495 (QRNK…HLTS), 501 to 541 (EMAQ…NLAL), 543 to 582 (PANHAPLREHGAIPRIVQLLIRAHQDTQRRATAGSGNTSA), and 648 to 687 (KEGAEMIEQEGTTAPLTELLHSRNEGVATYAAAVLFRMSE). Residues 732–818 (QGFRGYQGSG…QMAAWFDTDL (87 aa)) form a disordered region.

Belongs to the beta-catenin family.

Its subcellular location is the cytoplasm. It localises to the cytoskeleton. Functionally, binds to the cytoplasmic domain of the cell-cell adhesion molecule E-cadherin, and perhaps to other (membrane) proteins. The association of catenins to cadherins produces a complex which is linked to the actin filament network, and which seems to be of primary importance for cadherins cell-adhesion properties. This Urechis caupo (Innkeeper worm) protein is Catenin beta.